The sequence spans 173 residues: Crossover junction endodeoxyribonuclease RuvC (173 aa).

Catalysis depends on residues Asp-8, Glu-69, and Asp-141. Asp-8, Glu-69, and Asp-141 together coordinate Mg(2+).

The protein belongs to the RuvC family. Homodimer which binds Holliday junction (HJ) DNA. The HJ becomes 2-fold symmetrical on binding to RuvC with unstacked arms; it has a different conformation from HJ DNA in complex with RuvA. In the full resolvosome a probable DNA-RuvA(4)-RuvB(12)-RuvC(2) complex forms which resolves the HJ. Mg(2+) is required as a cofactor.

Its subcellular location is the cytoplasm. The catalysed reaction is Endonucleolytic cleavage at a junction such as a reciprocal single-stranded crossover between two homologous DNA duplexes (Holliday junction).. Functionally, the RuvA-RuvB-RuvC complex processes Holliday junction (HJ) DNA during genetic recombination and DNA repair. Endonuclease that resolves HJ intermediates. Cleaves cruciform DNA by making single-stranded nicks across the HJ at symmetrical positions within the homologous arms, yielding a 5'-phosphate and a 3'-hydroxyl group; requires a central core of homology in the junction. The consensus cleavage sequence is 5'-(A/T)TT(C/G)-3'. Cleavage occurs on the 3'-side of the TT dinucleotide at the point of strand exchange. HJ branch migration catalyzed by RuvA-RuvB allows RuvC to scan DNA until it finds its consensus sequence, where it cleaves and resolves the cruciform DNA. This chain is Crossover junction endodeoxyribonuclease RuvC, found in Xylella fastidiosa (strain 9a5c).